The following is a 304-amino-acid chain: Ribosomal RNA small subunit methyltransferase H (304 aa).

Residues 37-39, D57, F85, D100, and H107 each bind S-adenosyl-L-methionine; that span reads GGH.

It belongs to the methyltransferase superfamily. RsmH family.

Its subcellular location is the cytoplasm. The catalysed reaction is cytidine(1402) in 16S rRNA + S-adenosyl-L-methionine = N(4)-methylcytidine(1402) in 16S rRNA + S-adenosyl-L-homocysteine + H(+). Its function is as follows. Specifically methylates the N4 position of cytidine in position 1402 (C1402) of 16S rRNA. The chain is Ribosomal RNA small subunit methyltransferase H from Azobacteroides pseudotrichonymphae genomovar. CFP2.